A 30-amino-acid polypeptide reads, in one-letter code: Snaclec coagulation factor IX/factor X-binding protein subunit A (30 aa).

The C-type lectin domain occupies 1 to 30; it reads DCPSDWSPYEGHCYKHFIKWMNNEDAERFC. A disulfide bridge links cysteine 2 with cysteine 13.

The protein belongs to the snaclec family. As to quaternary structure, heterodimer of subunits A and B; disulfide-linked. As to expression, expressed by the venom gland.

The protein resides in the secreted. Functionally, anticoagulant protein which binds to the gamma-carboxyglutamic acid-domain regions of factors IX (F9) and factor X (F10) in the presence of calcium with a 1 to 1 stoichiometry. This chain is Snaclec coagulation factor IX/factor X-binding protein subunit A, found in Bothrops jararaca (Jararaca).